A 243-amino-acid chain; its full sequence is High affinity immunoglobulin epsilon receptor subunit beta (243 aa).

Residues 1–48 (MDTENKSRADLALPNPQESPSAPDIELLEASPPAKALPEKPASPPPQQ) form a disordered region. Over 1–59 (MDTENKSRADLALPNPQESPSAPDIELLEASPPAKALPEKPASPPPQQTWQSFLKKELE) the chain is Cytoplasmic. The helical transmembrane segment at 60–79 (FLGVTQVLVGLICLCFGTVV) threads the bilayer. The Extracellular segment spans residues 80 to 97 (CSTLQTSDFDDEVLLLYR). Residues 98–117 (AGYPFWGAVLFVLSGFLSIM) form a helical membrane-spanning segment. The Cytoplasmic segment spans residues 118-130 (SERKNTLYLVRGS). The chain crosses the membrane as a helical span at residues 131 to 150 (LGANIVSSIAAGLGIAILIL). At 151 to 179 (NLSNNSAYMNYCKDITEDDGCFVTSFITE) the chain is on the extracellular side. A helical transmembrane segment spans residues 180-199 (LVLMLLFLTILAFCSAVLLI). At 200–243 (IYRIGQEFERSKVPDDRLYEELHVYSPIYSALEDTREASAPVVS) the chain is on the cytoplasmic side. A phosphotyrosine mark is found at tyrosine 218 and tyrosine 224. A Phosphoserine modification is found at serine 225. At tyrosine 228 the chain carries Phosphotyrosine.

The protein belongs to the MS4A family. As to quaternary structure, tetramer of an alpha chain, a beta chain, and two disulfide linked gamma chains. Binds LILRB1. Interacts with FES/FPS and LYN. Interacts with FGR. Phosphorylated on tyrosine residues by LYN.

The protein localises to the membrane. In terms of biological role, high affinity receptor that binds to the Fc region of immunoglobulins epsilon. Aggregation of FCER1 by multivalent antigens is required for the full mast cell response, including the release of preformed mediators (such as histamine) by degranulation and de novo production of lipid mediators and cytokines. Also mediates the secretion of important lymphokines. Binding of allergen to receptor-bound IgE leads to cell activation and the release of mediators responsible for the manifestations of allergy. In Rattus norvegicus (Rat), this protein is High affinity immunoglobulin epsilon receptor subunit beta (Ms4a2).